Here is a 157-residue protein sequence, read N- to C-terminus: Phosphopantetheine adenylyltransferase (157 aa).

T10 contacts substrate. Residues 10-11 (TF) and H18 contribute to the ATP site. Residues K42, L74, and R88 each coordinate substrate. ATP is bound by residues 89-91 (GLR), E99, and 124-130 (NAFISSS).

The protein belongs to the bacterial CoaD family. In terms of assembly, homohexamer. Mg(2+) serves as cofactor.

The protein resides in the cytoplasm. The enzyme catalyses (R)-4'-phosphopantetheine + ATP + H(+) = 3'-dephospho-CoA + diphosphate. It functions in the pathway cofactor biosynthesis; coenzyme A biosynthesis; CoA from (R)-pantothenate: step 4/5. In terms of biological role, reversibly transfers an adenylyl group from ATP to 4'-phosphopantetheine, yielding dephospho-CoA (dPCoA) and pyrophosphate. This chain is Phosphopantetheine adenylyltransferase, found in Helicobacter pylori (strain P12).